We begin with the raw amino-acid sequence, 240 residues long: Keratinocyte-associated protein 3 (240 aa).

4 helical membrane-spanning segments follow: residues 21-41 (VGLA…VLHG), 63-83 (VISV…LLAS), 94-114 (VLLA…LGLL), and 163-183 (ALAL…LSGY).

It belongs to the TMEM54 family. As to expression, expressed in skin, pancreas and keratinocytes.

It localises to the membrane. In Homo sapiens (Human), this protein is Keratinocyte-associated protein 3 (KRTCAP3).